The chain runs to 2529 residues: Zinc finger FYVE domain-containing protein 26 (2529 aa).

Disordered stretches follow at residues His-584–His-650, Ser-689–Arg-709, and Val-733–Thr-810. A phosphoserine mark is found at Ser-605 and Ser-609. The segment covering Ser-689–Glu-701 has biased composition (basic and acidic residues). Residues Ser-755 to Arg-765 show a composition bias toward basic residues. Low complexity predominate over residues Ser-778–Ser-796. Ser-791 bears the Phosphoserine mark. Residues Ala-797–Thr-810 are compositionally biased toward polar residues. Residues Met-859–Asp-884 adopt a coiled-coil conformation. The segment at Gly-1258–Ser-1286 is disordered. Polar residues predominate over residues Thr-1263–Pro-1273. Residues Ser-1274–Pro-1283 show a composition bias toward basic and acidic residues. Positions Val-1488 to Leu-1515 form a coiled coil. 4 positions are modified to phosphoserine: Ser-1732, Ser-1754, Ser-1770, and Ser-1772. The tract at residues Ala-1762–Trp-1799 is disordered. An FYVE-type zinc finger spans residues Asp-1802 to Asn-1862. Residues Cys-1808, Cys-1811, Cys-1825, Cys-1828, Cys-1833, Cys-1836, Cys-1854, and Cys-1857 each coordinate Zn(2+). The disordered stretch occupies residues Thr-1865–Pro-1884.

This sequence belongs to the ZFYVE26 family. In terms of assembly, interacts with AP5Z1, AP5B1, AP5S1 and SPG11. Interacts with TTC19 and KIF13A.

The protein localises to the cytoplasm. It is found in the cytoskeleton. The protein resides in the microtubule organizing center. Its subcellular location is the centrosome. It localises to the midbody. Functionally, phosphatidylinositol 3-phosphate-binding protein required for the abscission step in cytokinesis: recruited to the midbody during cytokinesis and acts as a regulator of abscission. May also be required for efficient homologous recombination DNA double-strand break repair. The polypeptide is Zinc finger FYVE domain-containing protein 26 (Zfyve26) (Mus musculus (Mouse)).